Here is a 327-residue protein sequence, read N- to C-terminus: Microtubule-associated protein RP/EB family member 2 (327 aa).

Residues 1–21 (MPGPTQTLSPNGENNNDIIQD) form a disordered region. Position 2 is an N-acetylalanine (proline 2). Serine 9 bears the Phosphoserine mark. Residues 57-159 (TMSRHDIIAW…FIQWFKKFYD (103 aa)) form the Calponin-homology (CH) domain. A Phosphotyrosine modification is found at tyrosine 167. Disordered stretches follow at residues 171–240 (EARQ…DKDL) and 299–327 (ASEE…QEEY). Residues 187–327 (QIFNLPKKSH…EQQPPQQEEY (141 aa)) are DCTN1-binding. The span at 200–234 (SPTAGAAKSSPAAKPGSTPSRPSSAKRASSSGSAS) shows a compositional bias: low complexity. Serine 219 and serine 236 each carry phosphoserine. One can recognise an EB1 C-terminal domain in the interval 236-306 (SDKDLETQVI…LYASEEHEGH (71 aa)). The segment at 259 to 302 (EGVEKERDFYFGKLREIELLCQEHGQENDDLVQRLMDILYASEE) is APC-binding. The segment covering 300-317 (SEEHEGHTEEPEAEEQAH) has biased composition (basic and acidic residues). The span at 318-327 (EQQPPQQEEY) shows a compositional bias: low complexity.

It belongs to the MAPRE family. Interacts with DCTN1. Interacts with APC (via C-terminal). Interacts with monomeric and polymerized tubulin. Interacts with SLAIN1. Interacts (via the N-terminal region) with BAG1. Interacts with ASB14. Interacts with HAX1; this interaction is essential for epidermal cell migration. In terms of processing, phosphorylated at Ser-236 by CK2 leading to enhanced cell adhesion. Phosphorylated by CDK1 and AURKB during mitosis reduces the binding affinity of MAPRE2 for microtubules. Post-translationally, ubiquitinated in an ASB14-dependent manner; leading to proteasomal degradation. As to expression, expressed in different tumor cell lines. Up-regulated in activated B- and T-lymphocytes.

The protein localises to the cytoplasm. It is found in the cytoskeleton. Its function is as follows. Adapter protein that is involved in microtubule polymerization, and spindle function by stabilizing microtubules and anchoring them at centrosomes. Therefore, ensures mitotic progression and genome stability. Acts as a central regulator of microtubule reorganization in apico-basal epithelial differentiation. Plays a role during oocyte meiosis by regulating microtubule dynamics. Participates in neurite growth by interacting with plexin B3/PLXNB3 and microtubule reorganization during apico-basal epithelial differentiation. Also plays an essential role for cell migration and focal adhesion dynamics. Mechanistically, recruits HAX1 to microtubules in order to regulate focal adhesion dynamics. This Homo sapiens (Human) protein is Microtubule-associated protein RP/EB family member 2 (MAPRE2).